The following is a 325-amino-acid chain: BTB/POZ domain-containing protein KCTD12 (325 aa).

A disordered region spans residues M1–E28. Position 2 is an N-acetylalanine (A2). The segment covering P11–G21 has biased composition (gly residues). Y119 carries the post-translational modification Phosphotyrosine. The tract at residues L129–D202 is disordered. Residues S151, S171, and S185 each carry the phosphoserine modification. Residue T196 is modified to Phosphothreonine. Residue S200 is modified to Phosphoserine.

As to quaternary structure, interacts as a tetramer with GABBR1 and GABBR2. In terms of tissue distribution, present in a variety of fetal organs, with highest expression levels in the cochlea and brain and, in stark contrast, is detected only at extremely low levels in adult organs, such as brain and lung.

It localises to the presynaptic cell membrane. Its subcellular location is the postsynaptic cell membrane. Its function is as follows. Auxiliary subunit of GABA-B receptors that determine the pharmacology and kinetics of the receptor response. Increases agonist potency and markedly alter the G-protein signaling of the receptors by accelerating onset and promoting desensitization. The polypeptide is BTB/POZ domain-containing protein KCTD12 (KCTD12) (Homo sapiens (Human)).